Reading from the N-terminus, the 304-residue chain is tRNA dimethylallyltransferase (304 aa).

G10–S17 lines the ATP pocket. T12 to S17 provides a ligand contact to substrate. The segment at D35–Q38 is interaction with substrate tRNA.

This sequence belongs to the IPP transferase family. Monomer. It depends on Mg(2+) as a cofactor.

The catalysed reaction is adenosine(37) in tRNA + dimethylallyl diphosphate = N(6)-dimethylallyladenosine(37) in tRNA + diphosphate. In terms of biological role, catalyzes the transfer of a dimethylallyl group onto the adenine at position 37 in tRNAs that read codons beginning with uridine, leading to the formation of N6-(dimethylallyl)adenosine (i(6)A). This is tRNA dimethylallyltransferase from Gloeothece citriformis (strain PCC 7424) (Cyanothece sp. (strain PCC 7424)).